A 541-amino-acid chain; its full sequence is Kinesin light chain 1 (541 aa).

Residues 27–156 adopt a coiled-coil conformation; that stretch reads KTKQVIQGLE…HLEFMNQLKK (130 aa). A compositionally biased stretch (basic and acidic residues) spans 156 to 176; it reads KYDDDISPSEDKDSDSSKEPL. Positions 156–201 are disordered; that stretch reads KYDDDISPSEDKDSDSSKEPLDDLFPNDEDEPGQGIQHSDSSAAAA. Ser-162 carries the post-translational modification Phosphoserine. TPR repeat units follow at residues 211–244, 253–286, 295–328, 337–370, and 380–413; these read LRTL…LEKT, ATML…REKT, AATL…REKV, AKQL…YQTK, and AKTK…AHEA. Tyr-448 carries the phosphotyrosine modification. Ser-459 is modified (phosphoserine). Residues 463–496 form a TPR 6 repeat; it reads TTTLKNLGALYRRQGKFEAAETLEEAAMRSRKQG. The segment at 493–541 is disordered; it reads RKQGLDNVHKQRVAEVLNDPESMEKRRSRESLNMDVVKYESGPDGGEEA. Composition is skewed to basic and acidic residues over residues 495–505 and 514–524; these read QGLDNVHKQRV and SMEKRRSRESL. Phosphoserine; by AMPK is present on residues Ser-520 and Ser-523.

Belongs to the kinesin light chain family. As to quaternary structure, oligomeric complex composed of two heavy chains and two light chains. Interacts with SPAG9. Interacts with ATCAY; may link mitochondria to KLC1 and regulate mitochondria localization into neuron projections. Interacts (via TPR repeats) with TOR1A; the interaction associates TOR1A with the kinesin oligomeric complex. Interacts with BORCS5. Interacts with MAPK8IP3/JIP3 and NTRK2/TRKB; interaction with NTRK2/TRKB is mediated by MAPK8IP3/JIP3. Interacts with CLSTN1; phosphorylation at Ser-459 inhibits interaction with CLSTN1. Phosphorylation at Ser-459 by ERK inhibits interaction with CLSTN1 and localization to cytoplasmic vesicles.

It is found in the cell projection. It localises to the growth cone. Its subcellular location is the cytoplasmic vesicle. The protein resides in the cytoplasm. The protein localises to the cytoskeleton. Kinesin is a microtubule-associated force-producing protein that may play a role in organelle transport. The light chain may function in coupling of cargo to the heavy chain or in the modulation of its ATPase activity. This Mus musculus (Mouse) protein is Kinesin light chain 1 (Klc1).